The primary structure comprises 134 residues: Translation initiation factor 2 subunit beta (134 aa).

The segment covering 1–12 (MEYDDMLDRAME) has biased composition (basic and acidic residues). Positions 1–28 (MEYDDMLDRAMEETPEIDGTSERFEVPD) are disordered.

Belongs to the eIF-2-beta/eIF-5 family. As to quaternary structure, heterotrimer composed of an alpha, a beta and a gamma chain.

EIF-2 functions in the early steps of protein synthesis by forming a ternary complex with GTP and initiator tRNA. The protein is Translation initiation factor 2 subunit beta of Haloarcula marismortui (strain ATCC 43049 / DSM 3752 / JCM 8966 / VKM B-1809) (Halobacterium marismortui).